The chain runs to 479 residues: Ribosomal RNA small subunit methyltransferase F (479 aa).

Residues 125–131 (AAAPGSK), Glu149, Asp176, and Asp194 contribute to the S-adenosyl-L-methionine site. Residue Cys247 is the Nucleophile of the active site.

Belongs to the class I-like SAM-binding methyltransferase superfamily. RsmB/NOP family.

The protein localises to the cytoplasm. It carries out the reaction cytidine(1407) in 16S rRNA + S-adenosyl-L-methionine = 5-methylcytidine(1407) in 16S rRNA + S-adenosyl-L-homocysteine + H(+). Specifically methylates the cytosine at position 1407 (m5C1407) of 16S rRNA. The sequence is that of Ribosomal RNA small subunit methyltransferase F from Escherichia coli (strain SMS-3-5 / SECEC).